We begin with the raw amino-acid sequence, 203 residues long: Probable GTP-binding protein EngB (203 aa).

In terms of domain architecture, EngB-type G spans 1 to 190 (MPEIVLVGRS…LEALQERVRK (190 aa)). Residues 8 to 15 (GRSNVGKS), 35 to 39 (GVTRK), 53 to 56 (DMPG), 132 to 135 (NKID), and 169 to 171 (ISA) each bind GTP. Mg(2+)-binding residues include Ser-15 and Thr-37.

It belongs to the TRAFAC class TrmE-Era-EngA-EngB-Septin-like GTPase superfamily. EngB GTPase family. Mg(2+) is required as a cofactor.

Its function is as follows. Necessary for normal cell division and for the maintenance of normal septation. This Methanopyrus kandleri (strain AV19 / DSM 6324 / JCM 9639 / NBRC 100938) protein is Probable GTP-binding protein EngB.